Reading from the N-terminus, the 116-residue chain is Putative pterin-4-alpha-carbinolamine dehydratase (116 aa).

This sequence belongs to the pterin-4-alpha-carbinolamine dehydratase family.

It carries out the reaction (4aS,6R)-4a-hydroxy-L-erythro-5,6,7,8-tetrahydrobiopterin = (6R)-L-erythro-6,7-dihydrobiopterin + H2O. The polypeptide is Putative pterin-4-alpha-carbinolamine dehydratase (Paracidovorax citrulli (strain AAC00-1) (Acidovorax citrulli)).